We begin with the raw amino-acid sequence, 430 residues long: Immunoglobulin heavy constant delta (430 aa).

The Extracellular portion of the chain corresponds to Ala-1 to Thr-406. Residues Pro-6–Phe-98 form the Ig-like 1 domain. Cys-28 and Cys-84 form a disulfide bridge. Residues Glu-96–Pro-167 form a disordered region. The segment covering Ala-106–Ala-118 has biased composition (polar residues). O-linked (GalNAc...) serine glycosylation is found at Ser-109 and Ser-110. O-linked (GalNAc...) threonine glycosylation is found at Thr-113, Thr-126, Thr-127, Thr-131, and Thr-132. Residues Gly-138–Thr-158 show a composition bias toward basic and acidic residues. 2 Ig-like domains span residues Pro-175 to Ala-263 and Pro-267 to Glu-373. 2 disulfide bridges follow: Cys-190–Cys-249 and Cys-294–Cys-355. N-linked (GlcNAc...) asparagine glycans are attached at residues Asn-225, Asn-316, and Asn-367. The helical transmembrane segment at Leu-407–Ile-427 threads the bilayer. Over Lys-428 to Lys-430 the chain is Cytoplasmic.

As to quaternary structure, immunoglobulins are composed of two identical heavy chains and two identical light chains; disulfide-linked. An IgD molecule contains thus a delta heavy chain combined with either a kappa or a lambda light chains. Kappa light chains are found predominantly on the membrane IgD (mIgD) form and lambda on the secreted IgD (sIgD) form, this fact is poorly understood. Membrane-bound IgD molecules are non-covalently associated with a heterodimer of CD79A and CD79B.

The protein localises to the secreted. The protein resides in the cell membrane. Constant region of immunoglobulin heavy chains. Immunoglobulins, also known as antibodies, are membrane-bound or secreted glycoproteins produced by B lymphocytes. In the recognition phase of humoral immunity, the membrane-bound immunoglobulins serve as receptors which, upon binding of a specific antigen, trigger the clonal expansion and differentiation of B lymphocytes into immunoglobulins-secreting plasma cells. Secreted immunoglobulins mediate the effector phase of humoral immunity, which results in the elimination of bound antigens. The antigen binding site is formed by the variable domain of one heavy chain, together with that of its associated light chain. Thus, each immunoglobulin has two antigen binding sites with remarkable affinity for a particular antigen. The variable domains are assembled by a process called V-(D)-J rearrangement and can then be subjected to somatic hypermutations which, after exposure to antigen and selection, allow affinity maturation for a particular antigen. IgD is the major antigen receptor isotype on the surface of most peripheral B-cells, where it is coexpressed with IgM. The membrane-bound IgD (mIgD) induces the phosphorylation of CD79A and CD79B by the Src family of protein tyrosine kinases. Soluble IgD (sIgD) concentration in serum below those of IgG, IgA, and IgM but much higher than that of IgE. IgM and IgD molecules present on B cells have identical V regions and antigen-binding sites. After the antigen binds to the B-cell receptor, the secreted form sIgD is shut off. IgD is a potent inducer of TNF, IL1B, and IL1RN. IgD also induces release of IL6, IL10, and LIF from peripheral blood mononuclear cells. Monocytes seem to be the main producers of cytokines in vitro in the presence of IgD. The polypeptide is Immunoglobulin heavy constant delta (Homo sapiens (Human)).